The chain runs to 601 residues: 3-hydroxy-3-methylglutaryl-coenzyme A reductase (601 aa).

Residues 1–34 form a disordered region; sequence MDSRRRSPTVTAKAAAGELPLAPHEGQNQQPSIP. The next 2 membrane-spanning stretches (helical) occupy residues 36-58 and 86-106; these read SSDVLPLPLYLANGVFFTLFFSV and ALASLIASVIYLVSFFGLDFV. Residues 107–179 form a linker region; that stretch reads QSLIYKPNNE…PLITPQNSEE (73 aa). The interval 180 to 601 is catalytic; that stretch reads DEDIIKAVVA…IASSQLESDS (422 aa). The Charge relay system role is filled by Glu273. N-linked (GlcNAc...) asparagine glycosylation is present at Asn337. Catalysis depends on charge relay system residues Lys405 and Asp481. His579 (proton donor) is an active-site residue. An N-linked (GlcNAc...) asparagine glycan is attached at Asn583.

The protein belongs to the HMG-CoA reductase family.

It is found in the endoplasmic reticulum membrane. It catalyses the reaction (R)-mevalonate + 2 NADP(+) + CoA = (3S)-3-hydroxy-3-methylglutaryl-CoA + 2 NADPH + 2 H(+). It functions in the pathway metabolic intermediate biosynthesis; (R)-mevalonate biosynthesis; (R)-mevalonate from acetyl-CoA: step 3/3. Its function is as follows. Catalyzes the synthesis of mevalonate. The specific precursor of all isoprenoid compounds present in plants. The protein is 3-hydroxy-3-methylglutaryl-coenzyme A reductase (HMGR) of Catharanthus roseus (Madagascar periwinkle).